We begin with the raw amino-acid sequence, 175 residues long: MLTSGIILLAGSLLSPNPGLIFWTAITFVIVLLILKKIAWGPIIGALEEREKGIQSSIDRAHSAKEESEAILRKNRELLAKADAESDKIIREGKDYADKLRADITEKAQSEAKKMIATAKDEIEQEKRRALDVLRNEVADLAVKGAEKIIKTTLDADMQKKIVDSMIQDLSTKRN.

The helical transmembrane segment at Leu20–Trp40 threads the bilayer.

This sequence belongs to the ATPase B chain family. F-type ATPases have 2 components, F(1) - the catalytic core - and F(0) - the membrane proton channel. F(1) has five subunits: alpha(3), beta(3), gamma(1), delta(1), epsilon(1). F(0) has four main subunits: a(1), b(2) and c(10-14). The alpha and beta chains form an alternating ring which encloses part of the gamma chain. F(1) is attached to F(0) by a central stalk formed by the gamma and epsilon chains, while a peripheral stalk is formed by the delta and b chains.

The protein localises to the cell inner membrane. Its function is as follows. F(1)F(0) ATP synthase produces ATP from ADP in the presence of a proton or sodium gradient. F-type ATPases consist of two structural domains, F(1) containing the extramembraneous catalytic core and F(0) containing the membrane proton channel, linked together by a central stalk and a peripheral stalk. During catalysis, ATP synthesis in the catalytic domain of F(1) is coupled via a rotary mechanism of the central stalk subunits to proton translocation. Functionally, component of the F(0) channel, it forms part of the peripheral stalk, linking F(1) to F(0). The chain is ATP synthase subunit b from Pelodictyon phaeoclathratiforme (strain DSM 5477 / BU-1).